Here is a 458-residue protein sequence, read N- to C-terminus: ATP-dependent protease ATPase subunit HslU (458 aa).

Residues valine 18, 60–65 (GVGKTE), aspartate 270, glutamate 335, and arginine 407 each bind ATP.

It belongs to the ClpX chaperone family. HslU subfamily. A double ring-shaped homohexamer of HslV is capped on each side by a ring-shaped HslU homohexamer. The assembly of the HslU/HslV complex is dependent on binding of ATP.

It localises to the cytoplasm. Its function is as follows. ATPase subunit of a proteasome-like degradation complex; this subunit has chaperone activity. The binding of ATP and its subsequent hydrolysis by HslU are essential for unfolding of protein substrates subsequently hydrolyzed by HslV. HslU recognizes the N-terminal part of its protein substrates and unfolds these before they are guided to HslV for hydrolysis. The sequence is that of ATP-dependent protease ATPase subunit HslU from Desulfitobacterium hafniense (strain DSM 10664 / DCB-2).